We begin with the raw amino-acid sequence, 685 residues long: Keratin, type II cytoskeletal 2 epidermal (685 aa).

The disordered stretch occupies residues 1–20 (MSCQISCKSRRGGGGGGGGG). The head stretch occupies residues 1–196 (MSCQISCKSR…DPEIQNVKSQ (196 aa)). R22 bears the Asymmetric dimethylarginine mark. A phosphoserine mark is found at S25 and S28. An Omega-N-methylarginine modification is found at R52. S64 is subject to Phosphoserine. The interval 197 to 232 (EREQIKTLNNKFASFIDTVRFLEQQNQVLHTKWELL) is coil 1A. Residues 197–511 (EREQIKTLNN…KLLEGEECRM (315 aa)) form the IF rod domain. Residues 233 to 251 (QQLDVGTRTTNLDPVFQAY) form a linker 1 region. Residues 252-343 (IGILKKQVDR…TLYDTELSQL (92 aa)) form a coil 1B region. The interval 344 to 367 (QQNVTDTNVILSMDNNRNLDLDSI) is linker 12. The tract at residues 368-507 (IAEVQSQYEI…ATYRKLLEGE (140 aa)) is coil 2. A tail region spans residues 508-685 (ECRMSGDFSD…CGSGVTFSFR (178 aa)). Residues 532–685 (VASKAGFGSG…CGSGVTFSFR (154 aa)) form a disordered region. The span at 538–678 (FGSGGQSSGG…GSGSGEGCGS (141 aa)) shows a compositional bias: gly residues. 4 positions are modified to omega-N-methylarginine: R554, R588, R603, and R653.

This sequence belongs to the intermediate filament family. As to quaternary structure, heterotetramer of two type I and two type II keratins. Associates with KRT10.

Its subcellular location is the cytoplasm. Probably contributes to terminal cornification. Associated with keratinocyte activation, proliferation and keratinization. Required for maintenance of corneocytes and keratin filaments in suprabasal keratinocytes in the epidermis of the ear, potentially via moderation of expression and localization of keratins and their partner proteins. Plays a role in the establishment of the epidermal barrier on plantar skin. This Rattus norvegicus (Rat) protein is Keratin, type II cytoskeletal 2 epidermal.